Reading from the N-terminus, the 694-residue chain is Elongation factor G (694 aa).

Residues 9-288 (DAIRNIGIMA…VIVKWLPSPL (280 aa)) form the tr-type G domain. Residues 18 to 25 (AHIDAGKT), 82 to 86 (DTPGH), and 136 to 139 (NKMD) each bind GTP.

The protein belongs to the TRAFAC class translation factor GTPase superfamily. Classic translation factor GTPase family. EF-G/EF-2 subfamily.

It is found in the cytoplasm. Functionally, catalyzes the GTP-dependent ribosomal translocation step during translation elongation. During this step, the ribosome changes from the pre-translocational (PRE) to the post-translocational (POST) state as the newly formed A-site-bound peptidyl-tRNA and P-site-bound deacylated tRNA move to the P and E sites, respectively. Catalyzes the coordinated movement of the two tRNA molecules, the mRNA and conformational changes in the ribosome. This chain is Elongation factor G, found in Chlamydia trachomatis serovar A (strain ATCC VR-571B / DSM 19440 / HAR-13).